Consider the following 332-residue polypeptide: D-alanine--D-alanine ligase (332 aa).

The ATP-grasp domain occupies 124–329; it reads KMWFSALNIP…FPDYLLSNIN (206 aa). 154-209 provides a ligand contact to ATP; the sequence is ALVNWGSIFVKAASQGSSVGCYRIDNQEDVASTLAQAFTYSDYVIVEKTISARELE. The Mg(2+) site is built by Asp283, Glu296, and Asn298.

The protein belongs to the D-alanine--D-alanine ligase family. Mg(2+) is required as a cofactor. Requires Mn(2+) as cofactor.

The protein resides in the cytoplasm. The enzyme catalyses 2 D-alanine + ATP = D-alanyl-D-alanine + ADP + phosphate + H(+). The protein operates within cell wall biogenesis; peptidoglycan biosynthesis. Functionally, cell wall formation. This chain is D-alanine--D-alanine ligase, found in Shewanella piezotolerans (strain WP3 / JCM 13877).